The sequence spans 210 residues: Syntaxin-binding protein 6 (210 aa).

N-acetylserine is present on serine 2. The v-SNARE coiled-coil homology domain maps to 151–210 (GNSILHSAADSVTSAVQKASQALNERGERLGRAEEKTEDLKNSAQQFAETAHKLAMKHKC).

In terms of assembly, part of a ternary complex containing SNAP25 and STX1A that can be dissociated by NAPA and NSF. Interacts with STX4A.

It localises to the cytoplasm. It is found in the membrane. Functionally, forms non-fusogenic complexes with SNAP25 and STX1A and may thereby modulate the formation of functional SNARE complexes and exocytosis. The sequence is that of Syntaxin-binding protein 6 (STXBP6) from Bos taurus (Bovine).